The following is a 598-amino-acid chain: DNA mismatch repair protein MutL (598 aa).

This sequence belongs to the DNA mismatch repair MutL/HexB family.

Its function is as follows. This protein is involved in the repair of mismatches in DNA. It is required for dam-dependent methyl-directed DNA mismatch repair. May act as a 'molecular matchmaker', a protein that promotes the formation of a stable complex between two or more DNA-binding proteins in an ATP-dependent manner without itself being part of a final effector complex. This is DNA mismatch repair protein MutL from Geotalea daltonii (strain DSM 22248 / JCM 15807 / FRC-32) (Geobacter daltonii).